The primary structure comprises 214 residues: Adenylate kinase (214 aa).

10–15 (GAGKGT) is a binding site for ATP. The interval 30–59 (STGDMLRAAVKAQTPVGLKAKAVMDRGELV) is NMP. AMP-binding positions include Thr-31, Arg-36, 57-59 (ELV), 85-88 (GYPR), and Gln-92. The interval 126-163 (GRFTCAKCGTGYHDRHKQPAREGVCDVCGSTEFKRRPD) is LID. Arg-127 provides a ligand contact to ATP. Residues Cys-130, Cys-133, Cys-150, and Cys-153 each contribute to the Zn(2+) site. 2 residues coordinate AMP: Arg-160 and Arg-172. Gly-200 is a binding site for ATP.

This sequence belongs to the adenylate kinase family. Monomer.

It localises to the cytoplasm. The catalysed reaction is AMP + ATP = 2 ADP. It functions in the pathway purine metabolism; AMP biosynthesis via salvage pathway; AMP from ADP: step 1/1. Its function is as follows. Catalyzes the reversible transfer of the terminal phosphate group between ATP and AMP. Plays an important role in cellular energy homeostasis and in adenine nucleotide metabolism. This Erythrobacter litoralis (strain HTCC2594) protein is Adenylate kinase.